The chain runs to 113 residues: Gonadotropin subunit beta (113 aa).

Cystine bridges form between Cys6–Cys54, Cys20–Cys69, Cys23–Cys107, Cys31–Cys85, Cys35–Cys87, and Cys90–Cys97. Asn10 carries N-linked (GlcNAc...) asparagine glycosylation.

It belongs to the glycoprotein hormones subunit beta family. Heterodimer of an alpha and a beta chain.

It localises to the secreted. Functionally, involved in gametogenesis and steroidogenesis. The polypeptide is Gonadotropin subunit beta (cgb) (Muraenesox cinereus (Daggertooth pike conger)).